The chain runs to 620 residues: Protein AFR1 (620 aa).

Polar residues predominate over residues 1 to 12; that stretch reads MEGSYLSAQENQ. The segment at 1–20 is disordered; sequence MEGSYLSAQENQPIPERLIP. Phosphoserine is present on residues Ser-472 and Ser-526.

It to yeast YER158C.

In terms of biological role, acts in conjunction with the alpha-factor receptor to promote morphogenesis and adaptation. The protein is Protein AFR1 (AFR1) of Saccharomyces cerevisiae (strain ATCC 204508 / S288c) (Baker's yeast).